A 150-amino-acid chain; its full sequence is Interferon antagonist OPG027 (150 aa).

This sequence belongs to the orthopoxvirus OPG027 family.

Inhibits antiviral activity induced by type I interferons. Does not block signal transduction of IFN, but is important to counteract the host antiviral state induced by a pre-treatment with IFN. The protein is Interferon antagonist OPG027 (OPG027) of Homo sapiens (Human).